Here is a 197-residue protein sequence, read N- to C-terminus: Pyridoxal 5'-phosphate synthase subunit PdxT (197 aa).

Residue 53–55 participates in L-glutamine binding; that stretch reads GES. Residue Cys85 is the Nucleophile of the active site. L-glutamine is bound by residues Arg114 and 142-143; that span reads IR. Residues His179 and Glu181 each act as charge relay system in the active site.

Belongs to the glutaminase PdxT/SNO family. In the presence of PdxS, forms a dodecamer of heterodimers. Only shows activity in the heterodimer.

It carries out the reaction aldehydo-D-ribose 5-phosphate + D-glyceraldehyde 3-phosphate + L-glutamine = pyridoxal 5'-phosphate + L-glutamate + phosphate + 3 H2O + H(+). The enzyme catalyses L-glutamine + H2O = L-glutamate + NH4(+). It functions in the pathway cofactor biosynthesis; pyridoxal 5'-phosphate biosynthesis. In terms of biological role, catalyzes the hydrolysis of glutamine to glutamate and ammonia as part of the biosynthesis of pyridoxal 5'-phosphate. The resulting ammonia molecule is channeled to the active site of PdxS. This chain is Pyridoxal 5'-phosphate synthase subunit PdxT, found in Thermococcus gammatolerans (strain DSM 15229 / JCM 11827 / EJ3).